We begin with the raw amino-acid sequence, 98 residues long: Large ribosomal subunit protein uL23 (98 aa).

It belongs to the universal ribosomal protein uL23 family. In terms of assembly, part of the 50S ribosomal subunit. Contacts protein L29, and trigger factor when it is bound to the ribosome.

Functionally, one of the early assembly proteins it binds 23S rRNA. One of the proteins that surrounds the polypeptide exit tunnel on the outside of the ribosome. Forms the main docking site for trigger factor binding to the ribosome. The sequence is that of Large ribosomal subunit protein uL23 from Streptococcus gordonii (strain Challis / ATCC 35105 / BCRC 15272 / CH1 / DL1 / V288).